Reading from the N-terminus, the 144-residue chain is Necrosis-inducing secreted protein 1 (144 aa).

The N-terminal stretch at 1–19 is a signal peptide; it reads MQFRASIAAAAGLFALANA. Residues Asn-88, Asn-126, and Asn-133 are each glycosylated (N-linked (GlcNAc...) asparagine). The segment at 103 to 132 is BAK1/SERK3-binding; that stretch reads QYVVAAGLYSLYGASSSPTLSHYNVTVTVG.

Belongs to the NIS1 effector family.

It is found in the secreted. It localises to the host cytoplasm. Functionally, secreted effector that induces necrotic lesions in Nicotiana benthamiana. Interacts with the host receptor-like kinases (RLKs) BAK1/SERK3 and BKK1/SERK4, inhibits their kinase activity and suppresses INF1-induced pathogen-associated molecular pattern (PAMP)-triggered immunity (PTI) in N.benthamiana. Also interacts with the host receptor-like cytoplasmic kinase (RLCK) BIK1 and inhibits its kinase activity, thereby inhibiting PAMP-induced ROS generation. In PTI, phosphorylation relaying by RLKs and RLCKs is critical for the initiation of downstream signaling. This is Necrosis-inducing secreted protein 1 from Colletotrichum higginsianum (strain IMI 349063) (Crucifer anthracnose fungus).